A 639-amino-acid chain; its full sequence is Elongation factor 4 (639 aa).

The 183-residue stretch at 39-221 folds into the tr-type G domain; it reads TMIRNFCIIA…EIVRRVPAPV (183 aa). GTP-binding positions include 51–56 and 168–171; these read DHGKST and NKID.

Belongs to the TRAFAC class translation factor GTPase superfamily. Classic translation factor GTPase family. LepA subfamily.

The protein localises to the cell membrane. The enzyme catalyses GTP + H2O = GDP + phosphate + H(+). Required for accurate and efficient protein synthesis under certain stress conditions. May act as a fidelity factor of the translation reaction, by catalyzing a one-codon backward translocation of tRNAs on improperly translocated ribosomes. Back-translocation proceeds from a post-translocation (POST) complex to a pre-translocation (PRE) complex, thus giving elongation factor G a second chance to translocate the tRNAs correctly. Binds to ribosomes in a GTP-dependent manner. The polypeptide is Elongation factor 4 (Frankia casuarinae (strain DSM 45818 / CECT 9043 / HFP020203 / CcI3)).